Reading from the N-terminus, the 946-residue chain is Calcium-transporting ATPase type 2C member 2 (946 aa).

At 1 to 106 (MVEGRVSEFL…DNSEPVWKKY (106 aa)) the chain is on the cytoplasmic side. Positions 71 to 95 (VDLHTGLSEFSVTQRRLAHGWNEFV) are interaction with ORAI1. The chain crosses the membrane as a helical span at residues 107–127 (LDQFKNPLILLLLGSALVSVL). Over 128–129 (TK) the chain is Extracellular. A helical membrane pass occupies residues 130 to 150 (EYEDAVSIATAVLVVVTVAFI). Residues 151-231 (QEYRSEKSLE…EAEPCSKTDS (81 aa)) are Cytoplasmic-facing. Residues 232 to 252 (PLTGGGDLTTLSNIVFMGTLV) form a helical membrane-spanning segment. At 253-293 (QYGRGQGVVIGTGESSQFGEVFKMMQAEETPKTPLQKSMDR) the chain is on the extracellular side. T264 is subject to Phosphothreonine. Phosphoserine is present on residues S267 and S268. The helical transmembrane segment at 294–314 (LGKQLTLFSFGIIGLIMLIGW) threads the bilayer. The Cytoplasmic portion of the chain corresponds to 315–331 (SQGKQLLSMFTIGVSLA). Ca(2+)-binding residues include V332, A333, I335, and E337. A helical membrane pass occupies residues 332 to 352 (VAAIPEGLPIVVMVTLVLGVL). Residues 353-750 (RMAKKRVIVK…ISALSLITLS (398 aa)) are Extracellular-facing. Residue D379 is the 4-aspartylphosphate intermediate of the active site. Mg(2+) contacts are provided by D674 and D678. A helical transmembrane segment spans residues 751–771 (TVFNLPSPLNAMQILWINIIM). 2 residues coordinate Ca(2+): N768 and D772. Over 772–804 (DGPPAQSLGVEPVDKDAFRQPPRSVRDTILSRA) the chain is Cytoplasmic. The chain crosses the membrane as a helical span at residues 805-825 (LILKILMSAAIIISGTLFIFW). Residues 826 to 837 (KEMPEDRASTPR) are Extracellular-facing. A helical membrane pass occupies residues 838–855 (TTTMTFTCFVFFDLFNAL). At 856-874 (TCRSQTKLIFEIGFLRNHM) the chain is on the cytoplasmic side. The chain crosses the membrane as a helical span at residues 875–895 (FLYSVLGSILGQLAVIYIPPL). Residues 896-905 (QRVFQTENLG) are Extracellular-facing. The helical transmembrane segment at 906-926 (ALDLLFLTGLASSVFILSELL) threads the bilayer. Residues 927-946 (KLCEKYCCSPKRVQMHPEDV) are Cytoplasmic-facing.

This sequence belongs to the cation transport ATPase (P-type) (TC 3.A.3) family. Type IIA subfamily. As to quaternary structure, interacts (via N-terminus) with ORAI1 (via N- and C-termini); this interaction regulates Ca(2+) influx at the plasma membrane. Highly expressed in the gastrointestinal and respiratory tracts, prostate, thyroid, salivary, and mammary glands. Expressed in colon epithelial cells (at protein level). Expressed in brain and testis (at protein level).

It is found in the golgi apparatus. Its subcellular location is the trans-Golgi network membrane. It localises to the cell membrane. The protein localises to the basolateral cell membrane. The enzyme catalyses Ca(2+)(in) + ATP + H2O = Ca(2+)(out) + ADP + phosphate + H(+). It carries out the reaction Mn(2+)(in) + ATP + H2O = Mn(2+)(out) + ADP + phosphate + H(+). Its function is as follows. ATP-driven pump that supplies the Golgi apparatus with Ca(2+) and Mn(2+) ions, both essential cofactors for processing and trafficking of newly synthesized proteins in the secretory pathway. Within a catalytic cycle, acquires Ca(2+) or Mn(2+) ions on the cytoplasmic side of the membrane and delivers them to the lumenal side. The transfer of ions across the membrane is coupled to ATP hydrolysis and is associated with a transient phosphorylation that shifts the pump conformation from inward-facing to outward-facing state. Induces Ca(2+) influx independently of its ATP-driven pump function. At the basolateral membrane of mammary epithelial cells, interacts with Ca(2+) channel ORAI1 and mediates Ca(2+) entry independently of the Ca(2+) content of endoplasmic reticulum or Golgi stores. May facilitate transepithelial transport of large quantities of Ca(2+) for milk secretion via activation of Ca(2+) influx channels at the plasma membrane and active Ca(2+) transport at the Golgi apparatus. The polypeptide is Calcium-transporting ATPase type 2C member 2 (Homo sapiens (Human)).